A 91-amino-acid chain; its full sequence is Mercuric transport protein periplasmic component (91 aa).

A signal peptide spans 1 to 19 (MKKLLSALALAAVVAPVWA). Positions 22–88 (QTVTLSVPGM…ATEDAGYPSS (67 aa)) constitute an HMA domain. Cys33 and Cys36 together coordinate Hg(2+).

Belongs to the MerP family. In terms of assembly, monomer.

The protein localises to the periplasm. Its function is as follows. Involved in mercury resistance. Acts as a mercury scavenger that specifically binds to a mercuric ion in the periplasm and probably passes it to the cytoplasmic mercuric reductase MerA via the mercuric transport protein MerT. The protein is Mercuric transport protein periplasmic component of Pseudomonas fluorescens.